The chain runs to 420 residues: Transcription factor bHLH89 (420 aa).

A disordered region spans residues 196 to 216 (EENNNLDDGLNRKGRGSKKRK). Positions 207–216 (RKGRGSKKRK) are enriched in basic residues. Residues 212–261 (SKKRKIFPTERERRVHFKDRFGDLKNLIPNPTKNDRASIVGEAIDYIKEL) enclose the bHLH domain.

In terms of assembly, homodimer. Flowers.

Its subcellular location is the nucleus. In Arabidopsis thaliana (Mouse-ear cress), this protein is Transcription factor bHLH89 (BHLH89).